We begin with the raw amino-acid sequence, 88 residues long: Large ribosomal subunit protein bL27 (88 aa).

Residues 1-13 (MATKKGASSSSNG) show a composition bias toward polar residues. The tract at residues 1-25 (MATKKGASSSSNGRDSEAKRLGVKR) is disordered.

It belongs to the bacterial ribosomal protein bL27 family.

This Corynebacterium efficiens (strain DSM 44549 / YS-314 / AJ 12310 / JCM 11189 / NBRC 100395) protein is Large ribosomal subunit protein bL27.